Consider the following 323-residue polypeptide: Serine/threonine-protein phosphatase PP1-gamma catalytic subunit B (323 aa).

Mn(2+)-binding residues include Asp64, His66, Asp92, and Asn124. Catalysis depends on His125, which acts as the Proton donor. Residues His173 and His248 each contribute to the Mn(2+) site. Residues 301-323 are disordered; it reads KKKPNASRPVTPPRGIITKQAKK.

This sequence belongs to the PPP phosphatase family. PP-1 subfamily. In terms of assembly, PP1 comprises a catalytic subunit, ppp1c1, ppp1cb or ppp1cc, which is folded into its native form by inhibitor 2 and glycogen synthetase kinase 3, and then is complexed to one or several targeting or regulatory subunits. Requires Mn(2+) as cofactor.

Its subcellular location is the cytoplasm. It localises to the nucleus. The protein resides in the cleavage furrow. The protein localises to the nucleolus. It is found in the nucleoplasm. Its subcellular location is the chromosome. It localises to the centromere. The protein resides in the kinetochore. The protein localises to the nucleus speckle. It is found in the midbody. Its subcellular location is the mitochondrion. The enzyme catalyses O-phospho-L-seryl-[protein] + H2O = L-seryl-[protein] + phosphate. It carries out the reaction O-phospho-L-threonyl-[protein] + H2O = L-threonyl-[protein] + phosphate. Protein phosphatase that associates with over 200 regulatory proteins to form highly specific holoenzymes which dephosphorylate hundreds of biological targets. Protein phosphatase 1 (PP1) is essential for cell division, and participates in the regulation of glycogen metabolism, muscle contractility and protein synthesis. Promotes nuclear envelope reassembly by targeting nuclear membrane vesicles to chromatin at the end of mitosis. Acts by dephosphorylating membrane proteins such as lamin B receptor (lbr) to regulate the binding of membrane proteins to chromatin. The chain is Serine/threonine-protein phosphatase PP1-gamma catalytic subunit B (ppp1cc-b) from Xenopus laevis (African clawed frog).